The primary structure comprises 30 residues: Dermaseptin-3.4TR (30 aa).

Expressed by the skin glands.

It is found in the secreted. In terms of biological role, has antimicrobial activity. This Phyllomedusa trinitatis (Trinidad leaf frog) protein is Dermaseptin-3.4TR.